We begin with the raw amino-acid sequence, 241 residues long: DNA-binding dual master transcriptional regulator RpaA (241 aa).

The Response regulatory domain maps to 3-119 (RILIIDDDPA…EMLARVRALL (117 aa)). A 4-aspartylphosphate modification is found at D52. The segment at residues 132 to 231 (SEILNQGPLT…VYGAGYCLEL (100 aa)) is a DNA-binding region (ompR/PhoB-type).

Interacts with reduced ferredoxin (petF). Interacts with CikA, RpaB, SasA, Sll0038 (pixG) and a number of other proteins. In terms of processing, phosphorylated by SasA; phosphorylation is maximal when KaiC phosphorylation is active during the circadian cycle. Dephosphorylated by CikA. CikA and SasA cooperation generates RpaA activity oscillation that is distinct from that generated by CikA or SasA alone and offset from the rhythm of KaiC phosphorylation.

The protein localises to the cytoplasm. In terms of biological role, response regulator of 2 two-component regulatory systems SasA/RpaA and CikA/RpaA involved in genome-wide circadian gene expression. The histidine kinases have opposing effects modulated by the clock oscillator proteins; SasA phosphorylates RpaA (stimulated by fully phosphorylated KaiC1) while CikA dephosphorylates phospho-RpaA (stimulated by the phospho-Ser-432-KaiC1-KaiB complex). The RpaA regulon is about 300 genes, and includes itself, cikA, sigE, sigG, genes involved in photosynthesis, carbon metabolism in the light and dark, phototaxis, CRISPR arrays 2 and 3 as well as nearly 90 ncRNAs. Genes are up- or down-regulated in its absence. Involved in regulation of primary sugar and amino acid metabolism and in adaptation to light changes. Regulates the accumulation of the monomeric photosystem I and the D1 protein under high light conditions. Overexpression causes cells to grow more slowly, increases levels of transcripts for clock oscillator genes in the light and the dark, increases levels of SigE protein, increases accumulation of sugar catabolic enzymes in the dark with concomitant decreases in most sugar metabolites. Plays a role in cell division; overexpression from the psbAII promoter increases expression of some cell-division-related genes, alters cell volume and changes the outer cell membrane and cell wall appearance. This chain is DNA-binding dual master transcriptional regulator RpaA, found in Synechocystis sp. (strain ATCC 27184 / PCC 6803 / Kazusa).